Here is a 563-residue protein sequence, read N- to C-terminus: NAD-dependent malic enzyme (563 aa).

Catalysis depends on Tyr-101, which acts as the Proton donor. Residue Arg-154 participates in NAD(+) binding. Residue Lys-172 is the Proton acceptor of the active site. Residues Glu-243, Asp-244, and Asp-267 each contribute to the a divalent metal cation site. NAD(+) is bound by residues Asp-267 and Asn-416.

The protein belongs to the malic enzymes family. Homotetramer. Mg(2+) serves as cofactor. Requires Mn(2+) as cofactor.

The catalysed reaction is (S)-malate + NAD(+) = pyruvate + CO2 + NADH. It catalyses the reaction oxaloacetate + H(+) = pyruvate + CO2. The chain is NAD-dependent malic enzyme from Pseudomonas syringae pv. syringae (strain B728a).